The chain runs to 157 residues: Putative pre-16S rRNA nuclease (157 aa).

It belongs to the YqgF nuclease family.

Its subcellular location is the cytoplasm. In terms of biological role, could be a nuclease involved in processing of the 5'-end of pre-16S rRNA. This chain is Putative pre-16S rRNA nuclease, found in Anaplasma marginale (strain St. Maries).